Consider the following 377-residue polypeptide: Queuine tRNA-ribosyltransferase (377 aa).

The active-site Proton acceptor is aspartate 89. Substrate is bound by residues 89-93, aspartate 143, glutamine 187, and glycine 214; that span reads DSGGF. The tract at residues 245–251 is RNA binding; it reads GVGKPED. Residue aspartate 264 is the Nucleophile of the active site. Residues 269–273 form an RNA binding; important for wobble base 34 recognition region; it reads TRNAR. 4 residues coordinate Zn(2+): cysteine 302, cysteine 304, cysteine 307, and histidine 333.

It belongs to the queuine tRNA-ribosyltransferase family. In terms of assembly, homodimer. Within each dimer, one monomer is responsible for RNA recognition and catalysis, while the other monomer binds to the replacement base PreQ1. Requires Zn(2+) as cofactor.

The catalysed reaction is 7-aminomethyl-7-carbaguanine + guanosine(34) in tRNA = 7-aminomethyl-7-carbaguanosine(34) in tRNA + guanine. The protein operates within tRNA modification; tRNA-queuosine biosynthesis. Functionally, catalyzes the base-exchange of a guanine (G) residue with the queuine precursor 7-aminomethyl-7-deazaguanine (PreQ1) at position 34 (anticodon wobble position) in tRNAs with GU(N) anticodons (tRNA-Asp, -Asn, -His and -Tyr). Catalysis occurs through a double-displacement mechanism. The nucleophile active site attacks the C1' of nucleotide 34 to detach the guanine base from the RNA, forming a covalent enzyme-RNA intermediate. The proton acceptor active site deprotonates the incoming PreQ1, allowing a nucleophilic attack on the C1' of the ribose to form the product. After dissociation, two additional enzymatic reactions on the tRNA convert PreQ1 to queuine (Q), resulting in the hypermodified nucleoside queuosine (7-(((4,5-cis-dihydroxy-2-cyclopenten-1-yl)amino)methyl)-7-deazaguanosine). The sequence is that of Queuine tRNA-ribosyltransferase from Shewanella sediminis (strain HAW-EB3).